A 53-amino-acid polypeptide reads, in one-letter code: Large ribosomal subunit protein bL32 (53 aa).

A disordered region spans residues 1–27 (MAVQQNKKSRSRRDMRRSHDALTTAAV). Residues 7 to 16 (KKSRSRRDMR) are compositionally biased toward basic residues.

The protein belongs to the bacterial ribosomal protein bL32 family.

This chain is Large ribosomal subunit protein bL32, found in Glaesserella parasuis serovar 5 (strain SH0165) (Haemophilus parasuis).